A 139-amino-acid chain; its full sequence is Heavy metal-associated isoprenylated plant protein 13 (139 aa).

The 68-residue stretch at Pro-3–Glu-70 folds into the HMA domain. The disordered stretch occupies residues Glu-70–Ala-94. The span at Lys-73–Ala-85 shows a compositional bias: basic and acidic residues. Cys-136 bears the Cysteine methyl ester mark. Cys-136 is lipidated: S-farnesyl cysteine. The propeptide at Val-137 to Met-139 is removed in mature form.

The protein belongs to the HIPP family.

In terms of biological role, probable heavy-metal-binding protein. This is Heavy metal-associated isoprenylated plant protein 13 from Arabidopsis thaliana (Mouse-ear cress).